The primary structure comprises 57 residues: Potassium channel toxin alpha-KTx 26.3 (57 aa).

Residues 1–15 (MSGLSVFILIALVLS) form the signal peptide. The propeptide occupies 16–24 (VIIDVLNNS). Intrachain disulfides connect Cys-30–Cys-48, Cys-34–Cys-53, and Cys-38–Cys-55.

The protein belongs to the short scorpion toxin superfamily. Potassium channel inhibitor family. Alpha-KTx 26 subfamily. Expressed by the venom gland.

It localises to the secreted. Functionally, recombinant toxin that reversibly inhibits the potassium current of mKv1.3/KCNA3 channel stably expressed in COS7 cells (IC(50)=150 nM). This is Potassium channel toxin alpha-KTx 26.3 from Mesobuthus gibbosus (Mediterranean checkered scorpion).